We begin with the raw amino-acid sequence, 270 residues long: Cerberus (270 aa).

The first 20 residues, 1 to 20 (MLLNVLRICIIVCLVNDGAG), serve as a signal peptide directing secretion. Residues Asn-103, Asn-112, and Asn-154 are each glycosylated (N-linked (GlcNAc...) asparagine). 4 disulfides stabilise this stretch: Cys-169–Cys-215, Cys-183–Cys-229, Cys-193–Cys-245, and Cys-197–Cys-247. One can recognise a CTCK domain in the interval 169-253 (CKTLPFTQNI…ECTCEAHKSN (85 aa)). The N-linked (GlcNAc...) asparagine glycan is linked to Asn-228.

The protein belongs to the DAN family. As to quaternary structure, the long chain interacts with nodal/nr-1, bmp4 and wnt8, thereby inhibiting their function. The short chain interacts with nodal/nr-1 but not bmp4 or wnt8. In terms of tissue distribution, a component of the Nieuwkoop signaling center in the blastula. Expressed transiently in a broad anterior domain of the gastrula, including the anterior endoderm of the Spemann's organizer and more laterally the cardiac primordia. Expression is excluded from the prospective prechordal plate region and the ring of cells that give rise to the trunk-tail mesoderm.

It localises to the secreted. Its function is as follows. Inhibits wnt, nodal/nr-1 and bmp signaling in the embryo to promote head formation and anterior neural induction. Within the endoderm, acts as an essential mediator of nodal/nr-1-induced cardiogenesis in the overlying mesoderm. This Xenopus laevis (African clawed frog) protein is Cerberus.